A 239-amino-acid chain; its full sequence is MVIKAQSPAGFAEEYIIESIWNNRFPPGTILPAERELSELIGVTRTTLREVLQRLARDGWLTIQHGKPTKVNNFWETSGLNILETLARLDHESVPQLIDNLLSVRTNISTIFIRTALRQHPDKAQEVLATAHEVADHADAFADLDYNIFRGLAFASGNPIYGLILNGMKGLYTRIGRHYFANSEARSLALGFYHKLSSLCEQGAHDQVYETVRRYGHDSGEIWHRMQKNLPGDLAIQGR.

The HTH gntR-type domain maps to 6–74 (QSPAGFAEEY…HGKPTKVNNF (69 aa)). A DNA-binding region (H-T-H motif) is located at residues 34–53 (ERELSELIGVTRTTLREVLQ).

Homodimer.

Its subcellular location is the cytoplasm. Multifunctional regulator of fatty acid metabolism. This chain is Fatty acid metabolism regulator protein, found in Salmonella paratyphi C (strain RKS4594).